Here is a 153-residue protein sequence, read N- to C-terminus: Ribosome maturation factor RimP (153 aa).

It belongs to the RimP family.

Its subcellular location is the cytoplasm. In terms of biological role, required for maturation of 30S ribosomal subunits. In Christiangramia forsetii (strain DSM 17595 / CGMCC 1.15422 / KT0803) (Gramella forsetii), this protein is Ribosome maturation factor RimP.